We begin with the raw amino-acid sequence, 529 residues long: Probable feruloyl esterase B-1 (529 aa).

Positions 1-19 (MKISYFFVASLSYVSVARA) are cleaved as a signal peptide. 2 cysteine pairs are disulfide-bonded: Cys-27–Cys-75 and Cys-63–Cys-114. Asn-53, Asn-64, Asn-85, Asn-98, and Asn-138 each carry an N-linked (GlcNAc...) asparagine glycan. Disulfide bonds link Cys-187–Cys-445, Cys-256–Cys-273, Cys-282–Cys-295, and Cys-505–Cys-527. Residue Ser-188 is the Acyl-ester intermediate of the active site. Residue Asn-233 is glycosylated (N-linked (GlcNAc...) asparagine). Ca(2+)-binding residues include Asp-257, Asp-260, Ala-262, Asp-264, and Leu-266. Residues Asn-286, Asn-290, and Asn-354 are each glycosylated (N-linked (GlcNAc...) asparagine). Active-site charge relay system residues include Asp-404 and His-444.

This sequence belongs to the tannase family.

It localises to the secreted. The enzyme catalyses feruloyl-polysaccharide + H2O = ferulate + polysaccharide.. Involved in degradation of plant cell walls. Hydrolyzes the feruloyl-arabinose ester bond in arabinoxylans as well as the feruloyl-galactose and feruloyl-arabinose ester bonds in pectin. The chain is Probable feruloyl esterase B-1 (faeB-1) from Aspergillus terreus (strain NIH 2624 / FGSC A1156).